The following is a 397-amino-acid chain: MNIHEYQAKALLKGYGAPVAEGVAILKVEEAEAAAKSLPGPLYVVKSQIHAGGRGKGKFKELSPEAKGGVRLAKSIDEVVAHAKEMLGNTLVTAQTGEAGKQVNRLYIEDGADIARELYCSLLVDRSVGRVAFVVSTEGGMDIEAVAHDTPEKIQTIAIDPEAGVTAADVAAISKAFELEGAAAEDAKTLFPMLYKAFGEKDMALLEINPLIVMKDGHLRVLDAKMSFDGNALFRHDDVKVLRDETEEDAKEIEASKWDLAYVALDGNIGCMVNGAGLAMATMDIIKLYGKEPANFCDVGGGAGKEKVAAAFKIITADPKVEGILVNIFGGIMKCDVIAEGVIAAVKEVGLKVPLVVRLEGTNVELGKKILNESGLAITAADDLDDAAKKIVAAING.

One can recognise an ATP-grasp domain in the interval 9–254; that stretch reads KALLKGYGAP…ETEEDAKEIE (246 aa). Residues Lys-46, 53-55, Glu-109, Ala-112, and Glu-117 each bind ATP; that span reads GRG. Mg(2+) is bound by residues Asn-209 and Asp-223. Residues Asn-274 and 331-333 contribute to the substrate site; that span reads GIM.

This sequence belongs to the succinate/malate CoA ligase beta subunit family. As to quaternary structure, heterotetramer of two alpha and two beta subunits. The cofactor is Mg(2+).

It carries out the reaction succinate + ATP + CoA = succinyl-CoA + ADP + phosphate. It catalyses the reaction GTP + succinate + CoA = succinyl-CoA + GDP + phosphate. It participates in carbohydrate metabolism; tricarboxylic acid cycle; succinate from succinyl-CoA (ligase route): step 1/1. Functionally, succinyl-CoA synthetase functions in the citric acid cycle (TCA), coupling the hydrolysis of succinyl-CoA to the synthesis of either ATP or GTP and thus represents the only step of substrate-level phosphorylation in the TCA. The beta subunit provides nucleotide specificity of the enzyme and binds the substrate succinate, while the binding sites for coenzyme A and phosphate are found in the alpha subunit. In Rhizobium johnstonii (strain DSM 114642 / LMG 32736 / 3841) (Rhizobium leguminosarum bv. viciae), this protein is Succinate--CoA ligase [ADP-forming] subunit beta.